The sequence spans 292 residues: NAD kinase (292 aa).

The active-site Proton acceptor is the Asp-73. NAD(+) contacts are provided by residues 73–74, 147–148, His-158, Arg-175, Asp-177, 188–193, and Gln-247; these read DG, NE, and TGYSLS.

It belongs to the NAD kinase family. A divalent metal cation is required as a cofactor.

The protein resides in the cytoplasm. The enzyme catalyses NAD(+) + ATP = ADP + NADP(+) + H(+). Involved in the regulation of the intracellular balance of NAD and NADP, and is a key enzyme in the biosynthesis of NADP. Catalyzes specifically the phosphorylation on 2'-hydroxyl of the adenosine moiety of NAD to yield NADP. This chain is NAD kinase, found in Buchnera aphidicola subsp. Schizaphis graminum (strain Sg).